The primary structure comprises 151 residues: Probable calcium-binding protein CML31 (151 aa).

EF-hand domains follow at residues 14–42 (ALFATFDHDGDGRISAAELRLCMKTTLGE), 44–79 (VSDEEAGQLVASVDADGDGLLCEAEFVRLVQAAEVE), 84–119 (RRGTGLREAFGMYEMEGEGCITPTSLRRMLRRLGSD), and 120–151 (QDIDDCRAMICRFDLNGDGVLSFDEFKIMMNA). The Ca(2+) site is built by Asp-20, Asp-22, Asp-24, Arg-26, Glu-31, Asp-57, Asp-59, Asp-61, and Glu-68. Residues Asp-133, Asn-135, Asp-137, and Glu-144 each coordinate Ca(2+).

Potential calcium sensor. This is Probable calcium-binding protein CML31 (CML31) from Oryza sativa subsp. japonica (Rice).